A 1181-amino-acid chain; its full sequence is Poly [ADP-ribose] polymerase tankyrase (1181 aa).

18 ANK repeats span residues 56-85 (RKST…SIQA), 89-118 (GGLH…SPNT), 122-151 (WNYT…NHTI), 209-238 (RRST…DVHA), 242-271 (GGLV…NVNA), 275-304 (WAFT…DPTL), 362-394 (TGDT…LLNE), 398-427 (AFLT…KVNA), 431-458 (LGQT…DTNI), 483-513 (DSET…SVNC), 519-548 (RHST…EVYA), 552-581 (GGLV…NVNV), 585-614 (WKFT…DPMK), 638-668 (RGPS…NCRD), 672-701 (RNST…DVNA), 705-734 (GGLI…VVNA), 738-767 (WGFT…DAYM), and 771-799 (EGQT…LSQQ). 2 disordered regions span residues 807–834 (SLTS…SAIL) and 864–886 (RISP…DLLP). The 64-residue stretch at 889–952 (DTITNVSGFL…LKGIAQLRST (64 aa)) folds into the SAM domain. The region spanning 969–1174 (LPDDKEFVAV…YQIVKPDDSS (206 aa)) is the PARP catalytic domain. Positions 1091, 1094, 1099, and 1102 each coordinate Zn(2+).

It belongs to the ARTD/PARP family. As to quaternary structure, interacts (via ANK repeats) with PI31.

It carries out the reaction NAD(+) + (ADP-D-ribosyl)n-acceptor = nicotinamide + (ADP-D-ribosyl)n+1-acceptor + H(+).. The enzyme catalyses L-aspartyl-[protein] + NAD(+) = 4-O-(ADP-D-ribosyl)-L-aspartyl-[protein] + nicotinamide. The catalysed reaction is L-glutamyl-[protein] + NAD(+) = 5-O-(ADP-D-ribosyl)-L-glutamyl-[protein] + nicotinamide. Stimulates proteasome activity, probably by ADP-ribosylation of PI31. Modulates 26S proteasome assembly. The chain is Poly [ADP-ribose] polymerase tankyrase from Drosophila melanogaster (Fruit fly).